The chain runs to 95 residues: Co-chaperonin GroES (95 aa).

The protein belongs to the GroES chaperonin family. As to quaternary structure, heptamer of 7 subunits arranged in a ring. Interacts with the chaperonin GroEL.

Its subcellular location is the cytoplasm. Functionally, together with the chaperonin GroEL, plays an essential role in assisting protein folding. The GroEL-GroES system forms a nano-cage that allows encapsulation of the non-native substrate proteins and provides a physical environment optimized to promote and accelerate protein folding. GroES binds to the apical surface of the GroEL ring, thereby capping the opening of the GroEL channel. The protein is Co-chaperonin GroES of Methylocella silvestris (strain DSM 15510 / CIP 108128 / LMG 27833 / NCIMB 13906 / BL2).